The sequence spans 359 residues: Mitochondrial glutathione transporter SLC25A39 (359 aa).

Residues 1–14 (MDDQDPGGISPLQQ) lie on the Mitochondrial intermembrane side of the membrane. 3 Solcar repeats span residues 9–151 (ISPL…LKAF), 159–243 (SDLY…VKSQ), and 253–347 (TSVG…GKSF). A helical membrane pass occupies residues 15–35 (MVASGAGAVVTSLFMTPLDVV). Residues 36–121 (KVRLQSQRPT…VKIVRHEGTR (86 aa)) lie on the Mitochondrial matrix side of the membrane. [2Fe-2S] cluster contacts are provided by Cys-74, Cys-78, Cys-88, and Cys-94. A helical membrane pass occupies residues 122–142 (TLWSGLPATLVMTVPATAIYF). Over 143–164 (TAYDQLKAFLCGQSLTSDLYAP) the chain is Mitochondrial intermembrane. A helical transmembrane segment spans residues 165–185 (MVAGALARMGTVTVVSPLELV). The Mitochondrial matrix portion of the chain corresponds to 186-214 (RTKLQAQHVSYRELAACVQAAVAQGGWRS). Residues 215–235 (LWLGWGPTALRDVPFSALYWF) traverse the membrane as a helical segment. Residues 236–255 (NYELVKSQLNGPRQKEQTSV) lie on the Mitochondrial intermembrane side of the membrane. Residues 256-276 (GISFVAGGISGMVAATLTLPF) form a helical membrane-spanning segment. Residues 277–317 (DVVKTQRQMSLGAVEAMRVKPPRVDSTWLLLRRIQAESGTR) are Mitochondrial matrix-facing. Residues 318–338 (GLFAGFLPRIIKAAPSCAIMI) traverse the membrane as a helical segment. Residues 339–359 (STYEFGKSFFHRLNQEQPLGH) lie on the Mitochondrial intermembrane side of the membrane.

Belongs to the mitochondrial carrier (TC 2.A.29) family. In terms of processing, cleaved and degraded by AFG3L2; degradation by AFG3L2 is regulated by the ability of SLC25A39 to bind iron-sulfur. In absence of mitochondrial glutathione, SLC25A39 binds iron-sulfur, preventing cleavage and degradation by AFG3L2. The presence of mitochondrial glutathione prevents iron-sulfur-binding to SLC25A39, promoting cleavage and degradation by AFG3L2.

Its subcellular location is the mitochondrion inner membrane. It catalyses the reaction glutathione(in) = glutathione(out). Its activity is regulated as follows. The activity of SLC25A39 is regulated by levels of mitochondrial glutathione via its ability to bind [2Fe-2S] iron-sulfur cluster. Upon physiological levels of mitochondrial glutathione, glutathione prevents iron-sulfur-binding to SLC25A39 promoting cleavage and degradation by AFG3L2. Upon depletion of mitochondrial glutathione, SLC25A39 binds iron-sulfur, preventing cleavage and degradation by AFG3L2. Its function is as follows. Mitochondrial transporter required for glutathione import into mitochondria. Glutathione, which plays key roles in oxidative metabolism, is produced exclusively in the cytosol and is imported in many organelles. Mitochondrial glutathione is required for the activity and stability of proteins containing iron-sulfur clusters, as well as erythropoiesis. This Rattus norvegicus (Rat) protein is Mitochondrial glutathione transporter SLC25A39 (Slc25a39).